The chain runs to 835 residues: Protein translocase subunit SecA 1 (835 aa).

Residues Gln85, 103-107 (GEGKT), and Asp492 each bind ATP. The tract at residues 788–807 (VQGEAVHPSSDGEEAKKKPV) is disordered. Zn(2+) contacts are provided by Cys819, Cys821, Cys830, and Cys831.

This sequence belongs to the SecA family. In terms of assembly, monomer and homodimer. Part of the essential Sec protein translocation apparatus which comprises SecA, SecYEG and auxiliary proteins SecDF. Other proteins may also be involved. Requires Zn(2+) as cofactor.

The protein resides in the cell membrane. It localises to the cytoplasm. The catalysed reaction is ATP + H2O + cellular proteinSide 1 = ADP + phosphate + cellular proteinSide 2.. Functionally, part of the Sec protein translocase complex. Interacts with the SecYEG preprotein conducting channel. Has a central role in coupling the hydrolysis of ATP to the transfer of proteins into and across the cell membrane, serving as an ATP-driven molecular motor driving the stepwise translocation of polypeptide chains across the membrane. The protein is Protein translocase subunit SecA 1 of Bacillus thuringiensis (strain Al Hakam).